The following is a 326-amino-acid chain: Beta-ketoacyl-[acyl-carrier-protein] synthase III (326 aa).

Residues Cys-112 and His-251 contribute to the active site. The interval 252–256 (QANSR) is ACP-binding. Asn-281 is an active-site residue.

It belongs to the thiolase-like superfamily. FabH family. In terms of assembly, homodimer.

The protein localises to the cytoplasm. It catalyses the reaction malonyl-[ACP] + acetyl-CoA + H(+) = 3-oxobutanoyl-[ACP] + CO2 + CoA. It functions in the pathway lipid metabolism; fatty acid biosynthesis. Its function is as follows. Catalyzes the condensation reaction of fatty acid synthesis by the addition to an acyl acceptor of two carbons from malonyl-ACP. Catalyzes the first condensation reaction which initiates fatty acid synthesis and may therefore play a role in governing the total rate of fatty acid production. Possesses both acetoacetyl-ACP synthase and acetyl transacylase activities. Its substrate specificity determines the biosynthesis of branched-chain and/or straight-chain of fatty acids. The polypeptide is Beta-ketoacyl-[acyl-carrier-protein] synthase III (Clostridium botulinum (strain Kyoto / Type A2)).